The chain runs to 218 residues: Adenylate kinase (218 aa).

Position 10–15 (10–15 (GAGKGT)) interacts with ATP. The tract at residues 30–59 (STGDMLRAAVKAQSELGMAAKKVMDEGGLV) is NMP. AMP is bound by residues Thr31, Arg36, 57 to 59 (GLV), 85 to 88 (GFPR), and Gln92. The interval 122-159 (GRRVHPASGRTYHIVFNPPAVEGKDDVTGEDLVQRDDD) is LID. ATP contacts are provided by residues Arg123 and 132 to 133 (TY). AMP is bound by residues Arg156 and Arg167. An ATP-binding site is contributed by Gly203.

It belongs to the adenylate kinase family. Monomer.

It is found in the cytoplasm. The catalysed reaction is AMP + ATP = 2 ADP. It participates in purine metabolism; AMP biosynthesis via salvage pathway; AMP from ADP: step 1/1. In terms of biological role, catalyzes the reversible transfer of the terminal phosphate group between ATP and AMP. Plays an important role in cellular energy homeostasis and in adenine nucleotide metabolism. This is Adenylate kinase from Chlorobaculum parvum (strain DSM 263 / NCIMB 8327) (Chlorobium vibrioforme subsp. thiosulfatophilum).